The chain runs to 556 residues: Formate--tetrahydrofolate ligase 1 (556 aa).

Residue 65-72 (TPAGEGKT) participates in ATP binding.

Belongs to the formate--tetrahydrofolate ligase family.

It carries out the reaction (6S)-5,6,7,8-tetrahydrofolate + formate + ATP = (6R)-10-formyltetrahydrofolate + ADP + phosphate. It functions in the pathway one-carbon metabolism; tetrahydrofolate interconversion. The polypeptide is Formate--tetrahydrofolate ligase 1 (Desulfitobacterium hafniense (strain Y51)).